Here is a 116-residue protein sequence, read N- to C-terminus: Transcription elongation factor SPT4 homolog 2 (116 aa).

The C4-type zinc-finger motif lies at 19 to 39 (CLRCRLVKTYDQFRDAGCENC).

The protein belongs to the SPT4 family.

It is found in the nucleus. Functionally, may regulate transcription elongation by RNA polymerase II. May enhance transcriptional pausing at sites proximal to the promoter, which may in turn facilitate the assembly of an elongation competent RNA polymerase II complex. This chain is Transcription elongation factor SPT4 homolog 2, found in Arabidopsis thaliana (Mouse-ear cress).